Reading from the N-terminus, the 181-residue chain is Translation initiation factor IF-3 (181 aa).

The protein belongs to the IF-3 family. Monomer.

It localises to the cytoplasm. Functionally, IF-3 binds to the 30S ribosomal subunit and shifts the equilibrium between 70S ribosomes and their 50S and 30S subunits in favor of the free subunits, thus enhancing the availability of 30S subunits on which protein synthesis initiation begins. This Cereibacter sphaeroides (strain ATCC 17023 / DSM 158 / JCM 6121 / CCUG 31486 / LMG 2827 / NBRC 12203 / NCIMB 8253 / ATH 2.4.1.) (Rhodobacter sphaeroides) protein is Translation initiation factor IF-3.